Consider the following 347-residue polypeptide: O-methyltransferase aunE (347 aa).

W166 serves as a coordination point for S-adenosyl-L-methionine. The active-site Proton acceptor is H265.

It belongs to the class I-like SAM-binding methyltransferase superfamily. Cation-independent O-methyltransferase family.

It participates in secondary metabolite biosynthesis. O-methyltransferase; part of the gene cluster that mediates the biosynthesis of aurasperone B, a dimeric gamma-naphthopyrone. The first step in the biosynthesis of aurasperone B is the production of gamma-naphthopyrone precursor YWA1 by the non-reducing polyketide synthase albA, via condensation of one acetyl-CoA starter unit with 6 malonyl-CoA units. YWA1 is then methylated by aunE at position C-6 to yield foncesin which is further methylated at position C-8 by aunD to produce fonsecin B. A key enzyme in the biosynthetic pathway is the cytochrome P450 monooxygenase aunB which catalyzes the oxidative dimerization of fonsecin B to aurasperone B. AunB also catalyzes the oxidative dimerization of rubrofusarin B into aurasperone A. The protein is O-methyltransferase aunE of Aspergillus niger (strain ATCC 1015 / CBS 113.46 / FGSC A1144 / LSHB Ac4 / NCTC 3858a / NRRL 328 / USDA 3528.7).